The chain runs to 457 residues: Multidrug resistance protein MdtK (457 aa).

12 consecutive transmembrane segments (helical) span residues 11–31 (LLAL…MGFV), 53–73 (IWLP…PVIA), 93–113 (WLAG…GYII), 127–147 (AVGY…FQVA), 160–180 (GMVM…IFIY), 189–209 (GGVG…LAMV), 243–263 (LPIA…ALLV), 276–296 (IALN…AAVT), 314–334 (AART…IFTV), 350–370 (VVTL…SDSI), 387–407 (IFYI…YILA), and 418–438 (PAGF…MMML).

Belongs to the multi antimicrobial extrusion (MATE) (TC 2.A.66.1) family. MdtK subfamily.

It localises to the cell inner membrane. Functionally, multidrug efflux pump that functions probably as a Na(+)/drug antiporter. The chain is Multidrug resistance protein MdtK from Escherichia coli O9:H4 (strain HS).